The primary structure comprises 394 residues: Probable purine permease 23 (394 aa).

Positions 1–20 (MEMTEASKHTTTHEESEHVQ) are enriched in basic and acidic residues. The interval 1–24 (MEMTEASKHTTTHEESEHVQNPEP) is disordered. Phosphoserine is present on Ser-29. A run of 10 helical transmembrane segments spans residues 43-63 (ISVL…ILLL), 85-105 (WMQA…FFIF), 124-144 (LILL…LYAL), 152-172 (GFFM…TAII), 180-200 (WIII…PVFS), 211-231 (GIQA…LCLV), 254-274 (VLEM…VGLF), 301-321 (VGLA…VLYV), 328-348 (IVHM…FDFI), and 352-372 (FSWP…SYFY).

It belongs to the purine permeases (TC 2.A.7.14) family.

The protein resides in the membrane. This Arabidopsis thaliana (Mouse-ear cress) protein is Probable purine permease 23 (PUP23).